A 1818-amino-acid chain; its full sequence is Integrin beta-4 (1818 aa).

The first 28 residues, 1 to 28 (MAGPCCSPWVKLLLLAAMLSASLPGDLA), serve as a signal peptide directing secretion. Topologically, residues 29–712 (NRCKKAQVKS…HKKKDCPPGS (684 aa)) are extracellular. Residues 30–74 (RCKKAQVKSCTECIRVDKSCAYCTDELFKERRCNTQAELLAAGCR) form the PSI domain. Intrachain disulfides connect Cys-31/Cys-49, Cys-39/Cys-457, Cys-42/Cys-62, Cys-52/Cys-73, Cys-246/Cys-289, Cys-459/Cys-478, Cys-470/Cys-481, and Cys-483/Cys-492. In terms of domain architecture, VWFA spans 132–310 (DLYILMDFSN…KTQDYPSVPT (179 aa)). 2 residues coordinate Mg(2+): Ser-140 and Ser-142. 4 residues coordinate Ca(2+): Ser-142, Asp-145, Asp-146, and Asp-177. The segment at 195-200 (WPNSDP) is involved in NRG1- and IGF1-binding. Residues Asn-229, Asp-231, Pro-233, and Glu-234 each coordinate Ca(2+). Glu-234 is a Mg(2+) binding site. N-linked (GlcNAc...) asparagine glycosylation is present at Asn-328. Residue Glu-351 participates in Ca(2+) binding. 4 I-EGF domains span residues 459–493 (CELQ…KTCN), 494–539 (CSTG…HFCE), 540–576 (YDNF…RSCD), and 577–617 (CPLS…TTCE). Residues 473–475 (RGD) carry the Cell attachment site motif. An N-linked (GlcNAc...) asparagine glycan is attached at Asn-493. Intrachain disulfides connect Cys-494-Cys-522, Cys-505-Cys-520, Cys-514-Cys-525, Cys-527-Cys-538, Cys-545-Cys-559, Cys-553-Cys-564, Cys-566-Cys-575, Cys-577-Cys-600, Cys-584-Cys-598, Cys-592-Cys-603, and Cys-605-Cys-616. N-linked (GlcNAc...) asparagine glycosylation occurs at Asn-581. Asn-619 carries an N-linked (GlcNAc...) asparagine glycan. 4 cysteine pairs are disulfide-bonded: Cys-628–Cys-673, Cys-634–Cys-653, Cys-637–Cys-650, and Cys-682–Cys-708. An N-linked (GlcNAc...) asparagine glycan is attached at Asn-697. Residues 713 to 733 (FWWLIPLLIFLLLLLALLLLL) form a helical membrane-spanning segment. The interval 734–751 (CWKYCACCKACLGLLPCC) is palmitoylated on several cysteines. The Cytoplasmic portion of the chain corresponds to 734 to 1818 (CWKYCACCKA…THMDQQFFQT (1085 aa)). Phosphoserine is present on Ser-773. Positions 981 to 1086 (VNITIIKEQA…QVRRFQVQLS (106 aa)) constitute a Calx-beta domain. Positions 1005–1007 (RGD) match the Cell attachment site motif. 2 positions are modified to phosphoserine: Ser-1071 and Ser-1121. A disordered region spans residues 1115–1137 (INQTLSSPPPPHGDLGAPQNPNA). Fibronectin type-III domains follow at residues 1131–1220 (APQN…THQE) and 1224–1323 (EPGR…TQPK). The segment at 1402–1433 (LSASSGRSDEDGSVAGGVEGEGSGWIRGATPR) is disordered. Positions 1415–1426 (VAGGVEGEGSGW) are enriched in gly residues. A phosphoserine mark is found at Ser-1451, Ser-1454, and Ser-1470. Phosphothreonine is present on Thr-1483. Ser-1490 is subject to Phosphoserine. Phosphothreonine is present on Thr-1526. 2 consecutive Fibronectin type-III domains span residues 1526–1621 (TPTR…VHPQ) and 1639–1735 (APGP…SQVG). Ser-1787 carries the phosphoserine modification.

The protein belongs to the integrin beta chain family. In terms of assembly, heterodimer of an alpha and a beta subunit. Beta-4 associates with alpha-6. Interacts (via cytoplasmic region) with COL17A1 (via cytoplasmic region). Interacts (via cytoplasmic region) with DST isoform 3 (via N-terminus). Interacts (via cytoplasmic domain) with DST (via N-terminus). Interacts with RAC1. ITGA6:ITGB4 is found in a ternary complex with NRG1 and ERBB3. ITGA6:ITGB4 is found in a ternary complex with IGF1 and IGF1R. ITGA6:ITGB4 interacts with IGF2. Interacts with TMEM268; this interaction prevents ITGB4 degradation. Post-translationally, palmitoylated by DHHC3 at several cysteines of the membrane-proximal region, enhancing stability and cell surface expression. Palmitoylation also promotes secondary association with tertaspanins.

It is found in the cell membrane. Its subcellular location is the cell junction. The protein resides in the hemidesmosome. Its function is as follows. Integrin alpha-6/beta-4 is a receptor for laminin. It plays a critical structural role in the hemidesmosome of epithelial cells. Is required for the regulation of keratinocyte polarity and motility. ITGA6:ITGB4 binds to NRG1 (via EGF domain) and this binding is essential for NRG1-ERBB signaling. ITGA6:ITGB4 binds to IGF1 and this binding is essential for IGF1 signaling. ITGA6:ITGB4 binds to IGF2 and this binding is essential for IGF2 signaling. The chain is Integrin beta-4 (Itgb4) from Mus musculus (Mouse).